The following is a 123-amino-acid chain: Nitrogen fixation nifHD1 region GlnB-like protein 2 (123 aa).

The protein belongs to the P(II) protein family.

Could be involved in the regulation of nitrogen fixation. In Methanosarcina barkeri, this protein is Nitrogen fixation nifHD1 region GlnB-like protein 2 (glnBB).